Reading from the N-terminus, the 293-residue chain is Phosphatidylserine decarboxylase proenzyme (293 aa).

Active-site charge relay system; for autoendoproteolytic cleavage activity residues include Asp-90, His-147, and Ser-254. The Schiff-base intermediate with substrate; via pyruvic acid; for decarboxylase activity role is filled by Ser-254. Position 254 is a pyruvic acid (Ser); by autocatalysis (Ser-254).

The protein belongs to the phosphatidylserine decarboxylase family. PSD-B subfamily. Prokaryotic type I sub-subfamily. Heterodimer of a large membrane-associated beta subunit and a small pyruvoyl-containing alpha subunit. Pyruvate is required as a cofactor. Post-translationally, is synthesized initially as an inactive proenzyme. Formation of the active enzyme involves a self-maturation process in which the active site pyruvoyl group is generated from an internal serine residue via an autocatalytic post-translational modification. Two non-identical subunits are generated from the proenzyme in this reaction, and the pyruvate is formed at the N-terminus of the alpha chain, which is derived from the carboxyl end of the proenzyme. The autoendoproteolytic cleavage occurs by a canonical serine protease mechanism, in which the side chain hydroxyl group of the serine supplies its oxygen atom to form the C-terminus of the beta chain, while the remainder of the serine residue undergoes an oxidative deamination to produce ammonia and the pyruvoyl prosthetic group on the alpha chain. During this reaction, the Ser that is part of the protease active site of the proenzyme becomes the pyruvoyl prosthetic group, which constitutes an essential element of the active site of the mature decarboxylase.

It is found in the cell membrane. The catalysed reaction is a 1,2-diacyl-sn-glycero-3-phospho-L-serine + H(+) = a 1,2-diacyl-sn-glycero-3-phosphoethanolamine + CO2. It functions in the pathway phospholipid metabolism; phosphatidylethanolamine biosynthesis; phosphatidylethanolamine from CDP-diacylglycerol: step 2/2. In terms of biological role, catalyzes the formation of phosphatidylethanolamine (PtdEtn) from phosphatidylserine (PtdSer). The chain is Phosphatidylserine decarboxylase proenzyme from Yersinia pseudotuberculosis serotype O:1b (strain IP 31758).